A 55-amino-acid chain; its full sequence is Large ribosomal subunit protein bL33 (55 aa).

The protein belongs to the bacterial ribosomal protein bL33 family.

This is Large ribosomal subunit protein bL33 from Baumannia cicadellinicola subsp. Homalodisca coagulata.